The sequence spans 362 residues: G-protein coupled receptor homolog US27 (362 aa).

Topologically, residues 1–34 are virion surface; sequence MTTSTNNQTLTQVSNMTNHTLNSTEIYQLFEYTR. N-linked (GlcNAc...) asparagine; by host glycosylation is found at Asn7, Asn15, Asn18, and Asn22. The helical transmembrane segment at 35–58 threads the bilayer; the sequence is LGVWLMCIVGTFLNVLVITTILYY. The Intravirion portion of the chain corresponds to 59–67; it reads RRKKKSPSD. Residues 68–90 traverse the membrane as a helical segment; the sequence is TYICNLAVADLLIVVGLPFFLEY. Residues 91–104 are Virion surface-facing; it reads AKHHPKLSREVVCS. A helical transmembrane segment spans residues 105–126; the sequence is GLNACFYICLFAGVCFLINLSM. At 127 to 148 the chain is on the intravirion side; the sequence is DRYCVIVWGVELNRVRNNKRAT. A helical transmembrane segment spans residues 149 to 167; the sequence is CWVVIFWILAVLMGMPHYL. Residues 168-193 are Virion surface-facing; that stretch reads MYSHTNNECVGEFANETSGWFPVFLN. A helical transmembrane segment spans residues 194–213; sequence TKVNICGYLAPIALMAYTYN. Residues 214 to 233 lie on the Intravirion side of the membrane; the sequence is RMVRFIINYVGKWHMQTLHV. Residues 234–257 form a helical membrane-spanning segment; sequence LLVVVVSFASFWFPFNLALFLESI. At 258–274 the chain is on the virion surface side; it reads RLLAGVYNDTLQNVIIF. A helical membrane pass occupies residues 275–298; that stretch reads CLYVGQFLAYVRACLNPGIYILVG. Residues 299–362 lie on the Intravirion side of the membrane; sequence TQMRKDMWTT…MESGEEEFLL (64 aa). Residues 341 to 362 form a disordered region; sequence TKRTHYDRKNAPMESGEEEFLL.

Belongs to the G-protein coupled receptor 1 family. Heterodimer with US28. Interacts with host Gi alpha-1 subunit GNAI1; this interaction does not lead to the catalytic activation of Gi complex.

The protein localises to the virion. It is found in the host cell membrane. Functionally, interacts with the host Gi complex without activating it, thereby probably interfering with the chemokine-Gi signaling. May also function as a G protein sink to sequester G protein from the cell surface via internalization. Plays an important role in spread of HCMV via the extracellular route. This Homo sapiens (Human) protein is G-protein coupled receptor homolog US27 (US27).